The chain runs to 35 residues: MRVAKIGVIALFLLMAIGGIGGVMLAGYSFILRAG.

A helical transmembrane segment spans residues 6-26; it reads IGVIALFLLMAIGGIGGVMLA.

The protein belongs to the UPF0387 family.

It is found in the cell inner membrane. The sequence is that of UPF0387 membrane protein YohO from Salmonella paratyphi A (strain ATCC 9150 / SARB42).